The sequence spans 288 residues: UAP56-interacting factor (288 aa).

The UAP56-binding motif motif lies at 11 to 29; sequence TIDKIDMSLDDIIKLNKQE. The tract at residues 183–202 is disordered; that stretch reads DLPELSKTPPWRTSVSSGGS.

Belongs to the UIF family.

It localises to the nucleus. The protein resides in the nucleoplasm. The protein localises to the nucleus speckle. Functionally, required for mRNA export from the nucleus to the cytoplasm. Acts as an adapter that uses the ddx39b/uap56-nfx1 pathway to ensure efficient mRNA export and delivering to the nuclear pore. This chain is UAP56-interacting factor (fyttd1), found in Xenopus laevis (African clawed frog).